Reading from the N-terminus, the 122-residue chain is Large ribosomal subunit protein uL14 (122 aa).

It belongs to the universal ribosomal protein uL14 family. Part of the 50S ribosomal subunit. Forms a cluster with proteins L3 and L19. In the 70S ribosome, L14 and L19 interact and together make contacts with the 16S rRNA in bridges B5 and B8.

In terms of biological role, binds to 23S rRNA. Forms part of two intersubunit bridges in the 70S ribosome. This is Large ribosomal subunit protein uL14 from Bifidobacterium longum (strain DJO10A).